The chain runs to 294 residues: UPF0718 protein YcgR (294 aa).

8 helical membrane passes run 15-35 (ISILIEAIPFILIGVILSGII), 54-74 (LAVLFGALAGVLFPACECGII), 92-112 (AFMLTAPIINPIVLFSTYIAF), 117-137 (SVVFYRGGLALAVSLIIGVIL), 174-194 (IDEFFSVGKYLIIGAFIAAAM), 215-235 (LVMMGLAFVLSLCSEVDAFIA), 247-267 (LIAFLVFGAMVDIKNLLMMLA), and 273-293 (FVFLLITYIVVIVLAGSLLVK).

It belongs to the UPF0718 family.

The protein localises to the cell membrane. The sequence is that of UPF0718 protein YcgR (ycgR) from Bacillus subtilis (strain 168).